A 262-amino-acid polypeptide reads, in one-letter code: MGCCSSRSADSPASRVTRWRSTGIVALRDARLKVVPNEVLQVGNSLRILDLTNNKIAEIPQEVGTLVNMQRLVLAGNLVESIPANIGYLRNLKILTLDRNKISVLPEELGSLSNLQQLSISQNSLSRLPKSVGDLRNMLLLNVSDNKLIALPESIGGCSSLEELQANGNSIEDVPSSICNLVCLKSLSLNGNKIRQLPQNLLKDCKALQNISLHDNPISMDQFQQMDGFTEFEARRRKKFDKQIDSNVMMSSTALDEGIDLN.

LRR repeat units follow at residues 19-42, 43-66, 68-89, 90-112, 113-135, 137-158, 159-181, 182-204, and 206-231; these read WRSTGIVALRDARLKVVPNEVLQV, GNSLRILDLTNNKIAEIPQEVGTL, NMQRLVLAGNLVESIPANIGYL, RNLKILTLDRNKISVLPEELGSL, SNLQQLSISQNSLSRLPKSVGDL, NMLLLNVSDNKLIALPESIGGC, SSLEELQANGNSIEDVPSSICNL, VCLKSLSLNGNKIRQLPQNLLKD, and KALQNISLHDNPISMDQFQQMDGFTE.

This sequence belongs to the SHOC2 family. As to expression, widely expressed and preferentially in leaf sheathes.

In terms of biological role, leucine-rich repeat protein that likely mediates protein interactions, possibly in the context of signal transduction. The sequence is that of Plant intracellular Ras-group-related LRR protein 7 (IRL7) from Oryza sativa subsp. japonica (Rice).